Here is a 516-residue protein sequence, read N- to C-terminus: L-amino-acid oxidase (516 aa).

An N-terminal signal peptide occupies residues 1–18; sequence MNVFFMFSLLFLAALGSC. C28 and C191 are oxidised to a cystine. FAD is bound by residues 61–62, 81–82, R89, and 105–108; these read MA, EA, and GPMR. R108 lines the substrate pocket. N-linked (GlcNAc...) (complex) asparagine glycosylation occurs at N190. H241 contacts substrate. Residue V279 participates in FAD binding. C349 and C430 are disulfide-bonded. Residue N379 is glycosylated (N-linked (GlcNAc...) (complex) asparagine). Y390 provides a ligand contact to substrate. Residues E475 and 482–487 contribute to the FAD site; that span reads GWIDST. 482–483 provides a ligand contact to substrate; the sequence is GW.

In terms of assembly, homodimer; non-covalently linked. FAD is required as a cofactor. Post-translationally, N-glycosylated at Asn-190 and Asn-379 with bis-sialylated, biantennary, core-fucosylated dodecasaccharide (composed of N-acetylglucosamine, fucose, mannose, galactose, and sialic acid residues). In terms of tissue distribution, expressed by the venom gland.

The protein localises to the secreted. The enzyme catalyses an L-alpha-amino acid + O2 + H2O = a 2-oxocarboxylate + H2O2 + NH4(+). It carries out the reaction L-leucine + O2 + H2O = 4-methyl-2-oxopentanoate + H2O2 + NH4(+). The catalysed reaction is L-phenylalanine + O2 + H2O = 3-phenylpyruvate + H2O2 + NH4(+). It catalyses the reaction L-tryptophan + O2 + H2O = indole-3-pyruvate + H2O2 + NH4(+). The enzyme catalyses L-methionine + O2 + H2O = 4-methylsulfanyl-2-oxobutanoate + H2O2 + NH4(+). It carries out the reaction L-isoleucine + O2 + H2O = (S)-3-methyl-2-oxopentanoate + H2O2 + NH4(+). The catalysed reaction is L-arginine + O2 + H2O = 5-guanidino-2-oxopentanoate + H2O2 + NH4(+). It catalyses the reaction L-aspartate + O2 + H2O = oxaloacetate + H2O2 + NH4(+). The enzyme catalyses L-histidine + O2 + H2O = 3-(imidazol-5-yl)pyruvate + H2O2 + NH4(+). It carries out the reaction L-2-aminohexanoate + O2 + H2O = 2-oxohexanoate + H2O2 + NH4(+). The catalysed reaction is L-2-aminopentanoate + O2 + H2O = 2-oxopentanoate + H2O2 + NH4(+). Functionally, catalyzes an oxidative deamination of predominantly hydrophobic and aromatic L-amino acids, thus producing hydrogen peroxide that may contribute to the diverse toxic effects of this enzyme. Shows high affinity for L-Phe, L-Trp, L-Met, L-Leu, and L-Ile, moderate affinity for L-Arg, L-Asp, and L-His, and very low affinity for L-Gln, L-Lys, and L-Ala. Also shows high activity on L-norleucine (L-2-aminohexanoate), and L-norvaline (L-2-aminopentanoate) and a weak activity on L-ornithine and L-aminobutyric acid. Also exhibits diverse biological activities, such as hemorrhage, hemolysis, edema, apoptosis of vascular endothelial cells or tumor cell lines, and antiparasitic activities, as well as regulation of platelet aggregation. Its effect on platelets is controversial, since it either induces aggregation or inhibits agonist-induced aggregation. These different effects are probably due to different experimental conditions. A possible explanation of high efficacy it that LAAO may bind to target cells through its sialylated glycan moiety that would bind to sialic acid-binding lectins (siglec) on target cells. This interaction may result in production of locally high concentrations of hydrogen peroxide in or near the binding interface, leading, in turn to oxidative damage of the siglec or another adjacent cell structural elements. In Calloselasma rhodostoma (Malayan pit viper), this protein is L-amino-acid oxidase.